The following is a 131-amino-acid chain: Profilin-1 (131 aa).

The protein belongs to the profilin family. Occurs in many kinds of cells as a complex with monomeric actin in a 1:1 ratio.

It localises to the cytoplasm. The protein localises to the cytoskeleton. In terms of biological role, binds to actin and affects the structure of the cytoskeleton. At high concentrations, profilin prevents the polymerization of actin, whereas it enhances it at low concentrations. By binding to PIP2, it inhibits the formation of IP3 and DG. The sequence is that of Profilin-1 from Lilium longiflorum (Trumpet lily).